Reading from the N-terminus, the 256-residue chain is Chlorophyll a-b binding protein CP24 10B, chloroplastic (256 aa).

Residues 1–45 constitute a chloroplast transit peptide; it reads MTTTSATAVLNGLSSSFLTGGKKTQALLGAHVTARVTTPKRFVVA. A run of 2 helical transmembrane segments spans residues 106–126 and 134–154; these read WAMAAVLGIFVGQAWSGIPWF and AIAPFSFGSLLGTQLLLMGWV.

The protein belongs to the ELIP/psbS family.

The protein localises to the plastid. Its subcellular location is the chloroplast thylakoid membrane. The polypeptide is Chlorophyll a-b binding protein CP24 10B, chloroplastic (CAP10B) (Solanum lycopersicum (Tomato)).